The primary structure comprises 121 residues: Small ribosomal subunit protein uS13 (121 aa).

Positions 94 to 121 are disordered; that stretch reads DLPVRGQRTKTNARTRKGPRKSGVQLKK. The segment covering 100-121 has biased composition (basic residues); that stretch reads QRTKTNARTRKGPRKSGVQLKK.

It belongs to the universal ribosomal protein uS13 family. As to quaternary structure, part of the 30S ribosomal subunit. Forms a loose heterodimer with protein S19. Forms two bridges to the 50S subunit in the 70S ribosome.

In terms of biological role, located at the top of the head of the 30S subunit, it contacts several helices of the 16S rRNA. In the 70S ribosome it contacts the 23S rRNA (bridge B1a) and protein L5 of the 50S subunit (bridge B1b), connecting the 2 subunits; these bridges are implicated in subunit movement. Contacts the tRNAs in the A and P-sites. In Polynucleobacter necessarius subsp. necessarius (strain STIR1), this protein is Small ribosomal subunit protein uS13.